The following is a 668-amino-acid chain: Protein-glutamine gamma-glutamyltransferase (668 aa).

At 1 to 6 (MNAIPR) the chain is on the cytoplasmic side. The helical transmembrane segment at 7-27 (VALVWLLVAQVLVILPHLAYM) threads the bilayer. Topologically, residues 28–50 (PLWIAAMWLGCAAWRVQVFRMRA) are periplasmic. Residues 51–71 (GYPRAWVKLALALLAGAGVWL) traverse the membrane as a helical segment. Residues 72 to 74 (SRG) lie on the Cytoplasmic side of the membrane. Residues 75–95 (SLVGLDAGAVLLIAAFILKLV) traverse the membrane as a helical segment. At 96–103 (EMKTRRDA) the chain is on the periplasmic side. The next 2 helical transmembrane spans lie at 104–124 (LVLV…DDGF) and 125–145 (LAAL…IGLQ). Residues 146–158 (QSAFASRPWPTLR) are Cytoplasmic-facing. Residues 159 to 179 (LAGGLLLQALPLMLLLFLFFP) form a helical membrane-spanning segment. Topologically, residues 180 to 548 (RLGPLWSLPM…FGGLDPTRLG (369 aa)) are periplasmic. C404 (nucleophile) is an active-site residue. Residues H448 and D464 contribute to the active site. Residues 549–569 (LLLGAAAILSVGLLALFLLKP) form a helical membrane-spanning segment. Residues 570 to 668 (WQGRGDLRSR…TRDGRGEEQA (99 aa)) lie on the Cytoplasmic side of the membrane.

This sequence belongs to the transglutaminase-like superfamily.

Its subcellular location is the cell inner membrane. The enzyme catalyses L-glutaminyl-[protein] + L-lysyl-[protein] = [protein]-L-lysyl-N(6)-5-L-glutamyl-[protein] + NH4(+). Displays transglutaminase activity (TGase) in vitro. Plays a critical role in the viability of P.aeruginosa. Might contribute to an essential function linked to the cell wall. The chain is Protein-glutamine gamma-glutamyltransferase (tgpA) from Pseudomonas aeruginosa (strain ATCC 15692 / DSM 22644 / CIP 104116 / JCM 14847 / LMG 12228 / 1C / PRS 101 / PAO1).